The following is a 693-amino-acid chain: Triadin (693 aa).

The Cytoplasmic segment spans residues 1 to 47 (MTEITAEGNASTTTTVIDNKNGCIPKSPGKVLKRSVTEDIVTTFSSP). A helical membrane pass occupies residues 48–68 (AAWLLVIALIITWSAVAIVMF). Topologically, residues 69–693 (DLVDYKNFSA…NSPGQKQQEQ (625 aa)) are lumenal. Acidic residues predominate over residues 117-130 (EGDEDDEDADEDID). 3 disordered regions span residues 117 to 260 (EGDE…AVHE), 278 to 649 (GDLK…QTRP), and 666 to 693 (FQFPVTPVQQPGENPGKTNSPGQKQQEQ). Basic and acidic residues-rich tracts occupy residues 131–241 (KGEI…KETP) and 249–260 (KKDDKEMPAVHE). Position 301 is a phosphoserine (Ser-301). Residues 305–352 (LEEKEKEEKKKMEKKDTSDTKKKEKEVKKKSEETTIDGKGKEPGKPPE) are compositionally biased toward basic and acidic residues. Polar residues predominate over residues 354-364 (KQMTAKLTTQA). Basic and acidic residues-rich tracts occupy residues 366-427 (ARKD…KEEI) and 438-502 (GKKE…KEAK). N-linked (GlcNAc...) asparagine glycosylation is present at Asn-515. 2 stretches are compositionally biased toward basic and acidic residues: residues 526 to 547 (VKPEKAEHQEKGHPSIKKDKPK) and 558 to 579 (DSGKKKIEKSEKESKVPTREEN). Residue Asn-584 is glycosylated (N-linked (GlcNAc...) asparagine). Residues 587-637 (KAEKPGKIPKDSKEAPASKKDKEDSKEAPTSKKDKEDSKDVPHSKKDKEVT) are compositionally biased toward basic and acidic residues. The span at 672-693 (PVQQPGENPGKTNSPGQKQQEQ) shows a compositional bias: polar residues.

Homooligomer of variable subunit number; disulfide-linked. Interacts with CASQ1 and RYR1 in skeletal muscle. Interacts with CASQ2. Post-translationally, phosphorylated by CaMK2. N-glycosylated. Detected in heart (at protein level). Detected in heart.

The protein resides in the sarcoplasmic reticulum membrane. Contributes to the regulation of lumenal Ca2+ release via the sarcoplasmic reticulum calcium release channels RYR1 and RYR2, a key step in triggering skeletal and heart muscle contraction. Required for normal organization of the triad junction, where T-tubules and the sarcoplasmic reticulum terminal cisternae are in close contact. Required for normal skeletal muscle strength. Plays a role in excitation-contraction coupling in the heart and in regulating the rate of heart beats. The polypeptide is Triadin (Mus musculus (Mouse)).